The sequence spans 581 residues: AP2-like ethylene-responsive transcription factor AIL6 (581 aa).

Disordered regions lie at residues 105–132 (VRYS…HHNQ) and 205–240 (NNTN…TDSE). Low complexity-rich tracts occupy residues 108-122 (SDNS…SLTQ) and 218-232 (RGNN…NNNN). 2 DNA-binding regions (AP2/ERF) span residues 268 to 331 (IYRG…TNFP) and 367 to 425 (IYRG…TNFE).

Belongs to the AP2/ERF transcription factor family. AP2 subfamily. As to expression, expressed in roots, seedlings, hypocotyl, inflorescence, siliques, and pistils. Also detected at low levels in leaves.

The protein resides in the nucleus. Probably acts as a transcriptional activator. Binds to the GCC-box pathogenesis-related promoter element. May be involved in the regulation of gene expression by stress factors and by components of stress signal transduction pathways. This chain is AP2-like ethylene-responsive transcription factor AIL6, found in Arabidopsis thaliana (Mouse-ear cress).